Here is a 382-residue protein sequence, read N- to C-terminus: 6-oxocyclohex-1-ene-1-carbonyl-CoA hydrolase (382 aa).

The protein belongs to the enoyl-CoA hydratase/isomerase family. As to quaternary structure, homohexamer.

It catalyses the reaction 6-oxocyclohex-1-ene-1-carbonyl-CoA + 2 H2O = 3-hydroxy-6-carboxyhexanoyl-CoA + H(+). Its pathway is aromatic compound metabolism; benzoyl-CoA degradation. Functionally, involved in the central benzoyl-CoA catabolism. Catalyzes the addition of one molecule of water to the double bond and the hydrolytic cleavage of C-C bond in the alicyclic ring, 6-oxocyclohex-1-ene-1-carbonyl-CoA (6-OCH-CoA) to yield 3-hydroxypimelyl-CoA. The polypeptide is 6-oxocyclohex-1-ene-1-carbonyl-CoA hydrolase (Syntrophus aciditrophicus (strain SB)).